Reading from the N-terminus, the 484-residue chain is Glutamate--tRNA ligase (484 aa).

The short motif at 11–21 (PSPTGYLHIGN) is the 'HIGH' region element. Positions 252-256 (KLSKR) match the 'KMSKS' region motif. Lys-255 lines the ATP pocket.

It belongs to the class-I aminoacyl-tRNA synthetase family. Glutamate--tRNA ligase type 1 subfamily. Monomer.

It is found in the cytoplasm. The catalysed reaction is tRNA(Glu) + L-glutamate + ATP = L-glutamyl-tRNA(Glu) + AMP + diphosphate. In terms of biological role, catalyzes the attachment of glutamate to tRNA(Glu) in a two-step reaction: glutamate is first activated by ATP to form Glu-AMP and then transferred to the acceptor end of tRNA(Glu). This chain is Glutamate--tRNA ligase, found in Staphylococcus aureus (strain Mu3 / ATCC 700698).